A 319-amino-acid polypeptide reads, in one-letter code: MTILEELNDSSIPQRLDNHIFFGSVHSLTHTDFLVENNIRFFINVDLSTELISHIYHEVRSKFAHEIVIVNIDNDSQIPIESDLVRSFHWHNTSLLQQLIHHLDFLSGINNHGEPLTPPPESHYRNAYVQFDHPSDSVSILDKLLYGNKSEYSRTNIFQVTNEAKFQVFNDLITIFKYSIAQGGNTNSNILVLSENGSTDENLISLLMSTVLKENPTFNVYQALQFVKSIAVIPDTVRDEKILWVTGFINYQELIKKNEMYWGLGSQKGRKLTSFASPISKVERKQRRRDDQNIMRSKLPQQRQNPFCSTERPKRARCD.

The interval 281–319 is disordered; it reads KVERKQRRRDDQNIMRSKLPQQRQNPFCSTERPKRARCD. A compositionally biased stretch (polar residues) spans 299–308; that stretch reads LPQQRQNPFC.

It localises to the cytoplasm. The protein resides in the nucleus. This is an uncharacterized protein from Saccharomyces cerevisiae (strain ATCC 204508 / S288c) (Baker's yeast).